Here is a 314-residue protein sequence, read N- to C-terminus: ATP synthase gamma chain (314 aa).

The protein belongs to the ATPase gamma chain family. In terms of assembly, F-type ATPases have 2 components, CF(1) - the catalytic core - and CF(0) - the membrane proton channel. CF(1) has five subunits: alpha(3), beta(3), gamma(1), delta(1), epsilon(1). CF(0) has three main subunits: a, b and c.

The protein localises to the cellular thylakoid membrane. In terms of biological role, produces ATP from ADP in the presence of a proton gradient across the membrane. The gamma chain is believed to be important in regulating ATPase activity and the flow of protons through the CF(0) complex. This chain is ATP synthase gamma chain, found in Picosynechococcus sp. (strain ATCC 27264 / PCC 7002 / PR-6) (Agmenellum quadruplicatum).